The primary structure comprises 317 residues: Cold tolerance protein 1 (317 aa).

This sequence belongs to the CTO1 family.

In terms of biological role, protein required for cold tolerance. Plays a role in the regulation of phosphate uptake. This Saccharomyces cerevisiae (strain ATCC 204508 / S288c) (Baker's yeast) protein is Cold tolerance protein 1.